Reading from the N-terminus, the 655-residue chain is MASVIALSLLLPAAFAADHSPLRARLQDGLARTPQMGWNTYNHYNCYPDEEIFRSNAKALVDFGLADLGYRYATIDCGWTLTERLANGSLTWNATRFPSGFPAIADYLHDLGLLFGVYGDAGIKLCGPSDEHEEQDAQTFAAWGADSLKYDNCFSEASLGYPNVEYAPSSPLKPRYEVMSNALQKLDRPILFQICEWGIDFPALWAPALGHSWRIGNDIIPAWRSVFRTLNQAVPQTDFAGPGQWPDLDMLMVGNGVYSVPEEETHFSLWAILKSPLIIGSALKDATTEINSESLRILKQKAVIGYNQDKLGVSASLRRRWTDQGYEVWSGPLSNGRTVAAVINWRGEARDLTLDLPDIGLQSAGLVKNIWAGSTSRNVQTSYTARVEGHGTMLLELRDTVPAGVYPKKIFGSSRGQGTVFKSVYAGSTSENYTLAINFAKTIPSASKITVQVGANRQKLSIAVPPSRQQVTATIPLVAGSNNTITISHSHPITAIQVTSPNGTYYPATQFSLTGAARHETCGEGFCQPVGSKVSYLSPNSTARGVIPASAGTKYVEIDYINNEVAFSSSWGWGANSRNLTISLNGGEPVRLEVPLSGRHSELFGPGKGWWDTATLGVSVDGWKEGDNEVVVGNVNGEKGFQPYAADFVGLRVFD.

Residues 1–16 form the signal peptide; sequence MASVIALSLLLPAAFA. N-linked (GlcNAc...) asparagine glycans are attached at residues asparagine 87 and asparagine 93. A disulfide bridge links cysteine 126 with cysteine 153. Aspartate 151 (nucleophile) is an active-site residue. A substrate-binding site is contributed by 196–200; it reads EWGID. Aspartate 218 serves as the catalytic Proton donor. N-linked (GlcNAc...) asparagine glycosylation is found at asparagine 432, asparagine 482, asparagine 502, asparagine 540, and asparagine 579.

It belongs to the glycosyl hydrolase 27 family.

It is found in the secreted. The enzyme catalyses Hydrolysis of terminal, non-reducing alpha-D-galactose residues in alpha-D-galactosides, including galactose oligosaccharides, galactomannans and galactolipids.. Functionally, hydrolyzes a variety of simple alpha-D-galactoside as well as more complex molecules such as oligosaccharides and polysaccharides. In Aspergillus terreus (strain NIH 2624 / FGSC A1156), this protein is Probable alpha-galactosidase D (aglD).